The following is a 527-amino-acid chain: Protein SDS24 (527 aa).

2 stretches are compositionally biased toward low complexity: residues methionine 1–serine 22 and threonine 55–proline 74. Residues methionine 1–leucine 75 are disordered. Serine 94 bears the Phosphoserine mark. CBS domains follow at residues isoleucine 114–valine 175, leucine 198–serine 256, threonine 283–leucine 342, and leucine 443–glutamate 512. Over residues alanine 424–serine 447 the composition is skewed to low complexity. 2 disordered regions span residues alanine 424–proline 478 and threonine 508–methionine 527. Residues serine 458 and serine 524 each carry the phosphoserine modification.

The protein belongs to the SDS23 family.

Its subcellular location is the cytoplasm. It localises to the nucleus. Functionally, involved in DNA replication and cell separation during budding. This Saccharomyces cerevisiae (strain YJM789) (Baker's yeast) protein is Protein SDS24 (SDS24).